A 264-amino-acid polypeptide reads, in one-letter code: Endonuclease V (264 aa).

Residues Asp72 and Asp137 each contribute to the Mg(2+) site.

Belongs to the endonuclease V family. Mg(2+) serves as cofactor.

It localises to the cytoplasm. It catalyses the reaction Endonucleolytic cleavage at apurinic or apyrimidinic sites to products with a 5'-phosphate.. DNA repair enzyme involved in the repair of deaminated bases. Selectively cleaves double-stranded DNA at the second phosphodiester bond 3' to a deoxyinosine leaving behind the intact lesion on the nicked DNA. The sequence is that of Endonuclease V from Halobacterium salinarum (strain ATCC 700922 / JCM 11081 / NRC-1) (Halobacterium halobium).